The primary structure comprises 349 residues: Microbial Terpene synthase-like protein 1 (349 aa).

Residues aspartate 98, aspartate 102, asparagine 243, and serine 247 each coordinate Mg(2+). The DDXXD motif motif lies at 98-102 (DDILD).

The protein belongs to the terpene synthase family. Requires Mg(2+) as cofactor.

The protein operates within secondary metabolite biosynthesis; terpenoid biosynthesis. Its function is as follows. Sesquiterpene synthase converting farnesyl diphosphate to six sesquiterpenes, with beta-elemene, delta-cadinene and an unidentified oxygenated sesquiterpene as the major products. Has no diterpene synthase activity. The protein is Microbial Terpene synthase-like protein 1 of Selaginella moellendorffii (Spikemoss).